Reading from the N-terminus, the 314-residue chain is MPIKIPDQLPAAEVLGQENIFVMTESRAVTQNIRPLRVLILNLMPKKIETEIQLMRMLSNSPLQVDVDLLRIDDRESKNTPQAHLENFYHDFEQVRGNNYDGMIITGAPLGLVEFEEVVYWPRIVEIIEWSHQHVTSTLFLCWAVQAALKALYGMEKQTHGEKLSGVYRHHRLDENEPLLRGFDDEFVAPHSRYAAFDGDLIRAHTDLQIFAESEEAGVYLAATKDCRQVFVTGHPEYDVLTLDGEYQRDLAAGLDPVIPVNYYPNNDPALPPRASWRSHGHLLFSNWLNYYVYQLTSYRVEDIGKVFTYQQPK.

Cys-142 functions as the Acyl-thioester intermediate in the catalytic mechanism. The substrate site is built by Lys-163 and Ser-192. His-235 acts as the Proton acceptor in catalysis. Glu-237 is a catalytic residue. Position 249 (Arg-249) interacts with substrate.

This sequence belongs to the MetA family.

It localises to the cytoplasm. It carries out the reaction L-homoserine + succinyl-CoA = O-succinyl-L-homoserine + CoA. The protein operates within amino-acid biosynthesis; L-methionine biosynthesis via de novo pathway; O-succinyl-L-homoserine from L-homoserine: step 1/1. Transfers a succinyl group from succinyl-CoA to L-homoserine, forming succinyl-L-homoserine. The protein is Homoserine O-succinyltransferase of Aeromonas salmonicida (strain A449).